Consider the following 441-residue polypeptide: Pre-mRNA-splicing factor PRP46 (441 aa).

2 disordered regions span residues 1–22 (MPVA…NEPS) and 81–107 (MGAS…LTNL). Polar residues predominate over residues 83 to 107 (ASSSALTKHTPSASQPTTHDSLTNL). 7 WD repeats span residues 130 to 169 (GHQG…LRLT), 172 to 211 (GHIM…VVRH), 214 to 253 (GHLS…PVVV), 256 to 295 (GHKS…TMTT), 298 to 336 (HHKK…LVLN), 339 to 379 (DQNA…QSTQ), and 388 to 427 (ESEN…TAES).

The protein belongs to the WD repeat PRL1/PRL2 family. Associated with the spliceosome.

The protein resides in the cytoplasm. It localises to the nucleus. Functionally, involved in pre-mRNA splicing and required for cell cycle progression at G2/M. This is Pre-mRNA-splicing factor PRP46 (PRP46) from Yarrowia lipolytica (strain CLIB 122 / E 150) (Yeast).